Here is a 509-residue protein sequence, read N- to C-terminus: MVDGAMILSVLMMMALPSPSMEDEEPKVNPKLYMCVCEGLSCGNEDHCEGQQCFSSLSVNDGFRVYQKGCFQVYEQGKMTCKTPPSPGQAVECCQGDWCNRNVTARLPTKGKSFPGSQNFHLEVGLIILSVVFAVCLFACILGVALRKFKRRNQERLNPRDVEYGTIEGLITTNVGDSTLAELLDHSCTSGSGSGLPFLVQRTVARQITLLECVGKGRYGEVWRGSWQGENVAVKIFSSRDEKSWFRETELYNTVMLRHENILGFIASDMTSRHSSTQLWLITHYHEMGSLYDYLQLTTLDTVSCLRIVLSIASGLAHLHIEIFGTQGKSAIAHRDLKSKNILVKKNGQCCIADLGLAVMHSQSTNQLDVGNNPRVGTKRYMAPEVLDETIQVDCFDSYKRVDIWAFGLVLWEVARRMVSNGIVEDYKPPFYDVVPNDPSFEDMRKVVCVDQQRPNIPNRWFSDPTLTSLAKLMKECWYQNPSARLTALRIKKTLTKIDNSLDKLKTDC.

Positions Met-1–Ser-20 are cleaved as a signal peptide. The Extracellular portion of the chain corresponds to Met-21–Glu-123. Asn-102 is a glycosylation site (N-linked (GlcNAc...) asparagine). A helical transmembrane segment spans residues Val-124 to Leu-146. Topologically, residues Arg-147 to Cys-509 are cytoplasmic. The region spanning Ser-178–Gln-207 is the GS domain. One can recognise a Protein kinase domain in the interval Ile-208–Leu-502. ATP is bound by residues Val-214–Val-222 and Lys-235. The Proton acceptor role is filled by Asp-336. Residue Ser-501 is modified to Phosphoserine.

Belongs to the protein kinase superfamily. TKL Ser/Thr protein kinase family. TGFB receptor subfamily. In terms of assembly, interacts with FKBP1A. Interacts with FCHO1. Interacts with CLU. Interacts with type II receptors AMHR2 and ACVR2A. Interacts with BMP7. Interacts with GDF2/BMP9. Interacts with BMP6 (when glycosylated); the interaction may induce HAMP expression. Interacts with TSC22D1/TSC-22. Mg(2+) is required as a cofactor. Mn(2+) serves as cofactor. Urogenital ridge, testis, ovary, brain and lungs.

It localises to the membrane. The catalysed reaction is L-threonyl-[receptor-protein] + ATP = O-phospho-L-threonyl-[receptor-protein] + ADP + H(+). The enzyme catalyses L-seryl-[receptor-protein] + ATP = O-phospho-L-seryl-[receptor-protein] + ADP + H(+). Functionally, bone morphogenetic protein (BMP) type I receptor that is involved in a wide variety of biological processes, including bone, heart, cartilage, nervous, and reproductive system development and regulation. As a type I receptor, forms heterotetrameric receptor complexes with the type II receptors AMHR2, ACVR2A ors ACVR2B. Upon binding of ligands such as BMP7 or GDF2/BMP9 to the heteromeric complexes, type II receptors transphosphorylate ACVR1 intracellular domain. In turn, ACVR1 kinase domain is activated and subsequently phosphorylates SMAD1/5/8 proteins that transduce the signal. In addition to its role in mediating BMP pathway-specific signaling, suppresses TGFbeta/activin pathway signaling by interfering with the binding of activin to its type II receptor. Besides canonical SMAD signaling, can activate non-canonical pathways such as p38 mitogen-activated protein kinases/MAPKs. May promote the expression of HAMP, potentially via its interaction with BMP6. The polypeptide is Activin receptor type-1 (Acvr1) (Rattus norvegicus (Rat)).